We begin with the raw amino-acid sequence, 253 residues long: 23S rRNA (cytidine-2'-O)-methyltransferase TlyA (253 aa).

Positions 1-73 (MRFDFFVSKR…LKLDLLSEIY (73 aa)) constitute an S4 RNA-binding domain.

This sequence belongs to the TlyA family.

It carries out the reaction cytidine(1920) in 23S rRNA + S-adenosyl-L-methionine = 2'-O-methylcytidine(1920) in 23S rRNA + S-adenosyl-L-homocysteine + H(+). Its function is as follows. Catalyzes the 2'-O-methylation at nucleotide C1920 in 23S rRNA. Enhances motility. Enhances biofilm formation. Involved in the assembly of 70S ribosomes. Involved in virulence by promoting adherence and invasion to host cells. Involved in pathogenicity by modulating secretion of host-protective chemokine interleukin 8 (IL-8). Involved in susceptibility to antibiotic capreomycin. In Campylobacter jejuni subsp. jejuni serotype O:23/36 (strain 81-176), this protein is 23S rRNA (cytidine-2'-O)-methyltransferase TlyA.